Here is a 1738-residue protein sequence, read N- to C-terminus: Sodium leak channel NALCN (1738 aa).

The Cytoplasmic portion of the chain corresponds to 1 to 36 (MLKRKQSSRVEAQPVTDFGPDESLSDNADILWINKP). The chain crosses the membrane as a helical span at residues 37–57 (WVHSLLRICAIISVISVCMNT). Topologically, residues 58–65 (PMTFEHYP) are extracellular. Residues 66–90 (PLQYVTFTLDTLLMFLYTAEMIAKM) form a helical membrane-spanning segment. Over 91-106 (HIRGIVKGDSSYVKDR) the chain is Cytoplasmic. The chain crosses the membrane as a helical span at residues 107-129 (WCVFDGFMVFCLWVSLVLQVFEI). Residues 130 to 137 (ADIVDQMS) lie on the Extracellular side of the membrane. Residues 138-158 (PWGMLRIPRPLIMIRAFRIYF) form a helical; Voltage-sensor membrane-spanning segment. At 159–173 (RFELPRTRITNILKR) the chain is on the cytoplasmic side. The helical transmembrane segment at 174 to 199 (SGEQIWSVSIFLLFFLLLYGILGVQM) threads the bilayer. Topologically, residues 200–269 (FGTFTYHCVV…YSGFNEIGTS (70 aa)) are extracellular. Cystine bridges form between Cys-207–Cys-239 and Cys-229–Cys-245. N-linked (GlcNAc...) asparagine glycans are attached at residues Asn-210 and Asn-216. Residues 270–289 (IFTVYEAASQEGWVFLMYRA) constitute an intramembrane region (pore-forming). Residues 290 to 294 (IDSFP) are Extracellular-facing. A helical transmembrane segment spans residues 295-322 (RWRSYFYFITLIFFLAWLVKNVFIAVII). The Cytoplasmic portion of the chain corresponds to 323 to 382 (ETFAEIRVQFQQMWGSRSSTTSTATTQMFHEDAAGGWQLVAVDVNKPQGRAPACLQKMMR). A helical membrane pass occupies residues 383-403 (SSVFHMFILSMVTVDVIVAAS). Topologically, residues 404–416 (NYYKGENFRRQYD) are extracellular. A helical membrane pass occupies residues 417–439 (EFYLAEVAFTVLFDLEALLKIWC). Residues 440 to 447 (LGFTGYIS) are Cytoplasmic-facing. Residues 448 to 468 (SSLHKFELLLVIGTTLHVYPD) form a helical membrane-spanning segment. The Extracellular segment spans residues 469–472 (LYHS). The helical; Voltage-sensor transmembrane segment at 473-492 (QFTYFQVLRVVRLIKISPAL) threads the bilayer. Residues 493 to 502 (EDFVYKIFGP) lie on the Cytoplasmic side of the membrane. The helical transmembrane segment at 503–530 (GKKLGSLVVFTASLLIVMSAISLQMFCF) threads the bilayer. Residues 531–543 (VEELDRFTTFPRA) are Extracellular-facing. The pore-forming intramembrane region spans 544 to 563 (FMSMFQILTQEGWVDVMDQT). The Extracellular portion of the chain corresponds to 564-569 (LNAVGH). A helical transmembrane segment spans residues 570–599 (MWAPVVAIYFILYHLFATLILLSLFVAVIL). At 600–886 (DNLELDEDLK…QLYDLLGLVT (287 aa)) the chain is on the cytoplasmic side. Residues 762–785 (QERRSLRHGSNSQRISRGKSLETL) are disordered. A coiled-coil region spans residues 795-830 (YRNAQREDSEIKMIQEKKEQAEMKRKVQEEELRENH). Residues 887-906 (YLDWVMIIVTICSCISMMFE) traverse the membrane as a helical segment. At 907–915 (SPFRRVMHA) the chain is on the extracellular side. Residues 916–939 (PTLQIAEYVFVIFMSIELNLKIMA) form a helical membrane-spanning segment. Over 940–947 (DGLFFTPT) the chain is Cytoplasmic. The chain crosses the membrane as a helical span at residues 948-972 (AVIRDFGGVMDIFIYLVSLIFLCWM). Topologically, residues 973-980 (PQNVPAES) are extracellular. The helical; Voltage-sensor transmembrane segment at 981-1003 (GAQLLMVLRCLRPLRIFKLVPQM) threads the bilayer. Over 1004–1015 (RKVVRELFSGFK) the chain is Cytoplasmic. The chain crosses the membrane as a helical span at residues 1016–1039 (EIFLVSILLLTLMLVFASFGVQLF). Topologically, residues 1040–1104 (AGKLAKCNDP…NFNFDNVGNA (65 aa)) are extracellular. A disulfide bond links Cys-1046 and Cys-1057. A glycan (N-linked (GlcNAc...) asparagine) is linked at Asn-1064. Residues 1105-1124 (MLALFEVLSLKGWVEVRDVI) constitute an intramembrane region (pore-forming). The Extracellular portion of the chain corresponds to 1125-1129 (IHRVG). The chain crosses the membrane as a helical span at residues 1130 to 1159 (PIHGIYIHVFVFLGCMIGLTLFVGVVIANF). Residues 1160-1210 (NENKGTALLTVDQRRWEDLKSRLKIAQPLHLPPRPDNDGFRAKMYDITQHP) are Cytoplasmic-facing. Residues 1211–1227 (FFKRTIALLVLAQSVLL) traverse the membrane as a helical segment. Over 1228–1236 (SVKWDVEDP) the chain is Extracellular. Residues 1237-1260 (VTVPLATMSVVFTFIFVLEVTMKI) form a helical membrane-spanning segment. Residues 1261–1271 (IAMSPAGFWQS) are Cytoplasmic-facing. The helical transmembrane segment at 1272–1293 (RRNRYDLLVTSLGVVWVVLHFA) threads the bilayer. At 1294-1296 (LLN) the chain is on the extracellular side. Residues 1297-1318 (AYTYMMGACVIVFRFFSICGKH) form a helical; Voltage-sensor membrane-spanning segment. Topologically, residues 1319 to 1331 (VTLKMLLLTVVVS) are cytoplasmic. Residues 1332-1357 (MYKSFFIIVGMFLLLLCYAFAGVVLF) form a helical membrane-spanning segment. At 1358–1378 (GTVKYGENINRHANFSSAGKA) the chain is on the extracellular side. The segment at residues 1379–1398 (ITVLFRIVTGEDWNKIMHDC) is an intramembrane region (pore-forming). At 1399 to 1420 (MVQPPFCTPDEFTYWATDCGNY) the chain is on the extracellular side. Cys-1405 and Cys-1417 form a disulfide bridge. Residues 1421–1447 (AGALMYFCSFYVIIAYIMLNLLVAIIV) traverse the membrane as a helical segment. The Cytoplasmic segment spans residues 1448–1738 (ENFSLFYSTE…DESGDDLLDI (291 aa)). The disordered stretch occupies residues 1611 to 1678 (PPSIETTQPS…QWRLPSAPKP (68 aa)). The span at 1613 to 1632 (SIETTQPSEDTNANSQDNSM) shows a compositional bias: polar residues. A compositionally biased stretch (low complexity) spans 1633–1648 (QPETSSQQQLLSPTLS).

It belongs to the NALCN family. As to quaternary structure, found in a complex with NALCN, UNC79, UNC80 and NACL1; these auxiliary subunits are indispensable for the function of NALCN channel. Interacts with UNC80; required for the NALCN activation/inhibition by GPCRs in neurons. Found in a complex with NALCN, UNC79 and UNC80; UNC80 bridges NALCN to UNC79. Interacts with CHRM3. In terms of processing, phosphorylated on tyrosine residues.

The protein resides in the cell membrane. The catalysed reaction is Na(+)(in) = Na(+)(out). With respect to regulation, inhibited by low micromolar concentrations of Gd(3+) and high micromolar concentrations of verapamil. Insensitive to tetrodotoxin (TTX) and potentiated by low external Ca(2+) concentration. Functionally, voltage-gated ion channel responsible for the resting Na(+) permeability that controls neuronal excitability. NALCN channel functions as a multi-protein complex, which consists at least of NALCN, NALF1, UNC79 and UNC80. NALCN is the voltage-sensing, pore-forming subunit of the NALCN channel complex. NALCN channel complex is constitutively active and conducts monovalent cations but is blocked by physiological concentrations of extracellular divalent cations. In addition to its role in regulating neuronal excitability, is required for normal respiratory rhythm, systemic osmoregulation by controlling the serum sodium concentration and in the regulation of the intestinal pace-making activity in the interstitial cells of Cajal. NALCN channel is also activated by neuropeptides such as neurotensin and substance P (SP) through a SRC family kinases-dependent pathway. In addition, NALCN activity is enhanced/modulated by several GPCRs, such as CHRM3. The chain is Sodium leak channel NALCN from Homo sapiens (Human).